The sequence spans 295 residues: GTPase Era (295 aa).

One can recognise an Era-type G domain in the interval 7 to 176; the sequence is KTISVCIIGR…IKSKAKVSPW (170 aa). The G1 stretch occupies residues 15–22; sequence GRPNSGKS. 15–22 lines the GTP pocket; it reads GRPNSGKS. Residues 41–45 are G2; the sequence is QTTRS. A G3 region spans residues 62–65; sequence DTPG. Residues 62-66 and 124-127 contribute to the GTP site; these read DTPGI and NKID. The segment at 124–127 is G4; that stretch reads NKID. The tract at residues 152 to 154 is G5; it reads ISA. The KH type-2 domain maps to 204–281; sequence LQQELPYKLT…HLFLFVKVHA (78 aa).

This sequence belongs to the TRAFAC class TrmE-Era-EngA-EngB-Septin-like GTPase superfamily. Era GTPase family. Monomer.

It is found in the cytoplasm. It localises to the cell inner membrane. In terms of biological role, an essential GTPase that binds both GDP and GTP, with rapid nucleotide exchange. Plays a role in 16S rRNA processing and 30S ribosomal subunit biogenesis and possibly also in cell cycle regulation and energy metabolism. The sequence is that of GTPase Era from Rickettsia typhi (strain ATCC VR-144 / Wilmington).